The sequence spans 414 residues: tRNA(Ile)-lysidine synthase (414 aa).

An ATP-binding site is contributed by 17–22 (SGGCDS).

This sequence belongs to the tRNA(Ile)-lysidine synthase family.

Its subcellular location is the cytoplasm. The enzyme catalyses cytidine(34) in tRNA(Ile2) + L-lysine + ATP = lysidine(34) in tRNA(Ile2) + AMP + diphosphate + H(+). In terms of biological role, ligates lysine onto the cytidine present at position 34 of the AUA codon-specific tRNA(Ile) that contains the anticodon CAU, in an ATP-dependent manner. Cytidine is converted to lysidine, thus changing the amino acid specificity of the tRNA from methionine to isoleucine. The chain is tRNA(Ile)-lysidine synthase from Exiguobacterium sibiricum (strain DSM 17290 / CCUG 55495 / CIP 109462 / JCM 13490 / 255-15).